The following is an 88-amino-acid chain: Probable glutaredoxin ssr2061 (88 aa).

Cys15 and Cys18 are joined by a disulfide.

The protein belongs to the glutaredoxin family.

Functionally, has a glutathione-disulfide oxidoreductase activity in the presence of NADPH and glutathione reductase. Reduces low molecular weight disulfides and proteins. This Synechocystis sp. (strain ATCC 27184 / PCC 6803 / Kazusa) protein is Probable glutaredoxin ssr2061.